The following is a 202-amino-acid chain: Dephospho-CoA kinase (202 aa).

In terms of domain architecture, DPCK spans Ile-5–Arg-202. Residue Ala-13 to Ala-18 coordinates ATP.

The protein belongs to the CoaE family.

The protein resides in the cytoplasm. The enzyme catalyses 3'-dephospho-CoA + ATP = ADP + CoA + H(+). The protein operates within cofactor biosynthesis; coenzyme A biosynthesis; CoA from (R)-pantothenate: step 5/5. In terms of biological role, catalyzes the phosphorylation of the 3'-hydroxyl group of dephosphocoenzyme A to form coenzyme A. This chain is Dephospho-CoA kinase, found in Xanthomonas oryzae pv. oryzae (strain MAFF 311018).